The primary structure comprises 207 residues: MLNKLSLLLKDAGISLTDHQKNQLIAYVNMLHKWNKAYNLTSVRDPNEMLVRHILDSIVVAPYLQGERFIDVGTGPGLPGIPLSIVRPEAHFTLLDSLGKRVRFLRQVQHELKLENIEPVQSRVEEFPSEPPFDGVISRAFASLNDMVSWCHHLPGEQGRFYALKGQMPEDEIALLPEEYQVESVVKLHVPALDGERHLVMIKANKI.

S-adenosyl-L-methionine contacts are provided by residues G73, L78, 124–125, and R139; that span reads VE.

The protein belongs to the methyltransferase superfamily. RNA methyltransferase RsmG family.

The protein localises to the cytoplasm. It catalyses the reaction guanosine(527) in 16S rRNA + S-adenosyl-L-methionine = N(7)-methylguanosine(527) in 16S rRNA + S-adenosyl-L-homocysteine. Specifically methylates the N7 position of guanine in position 527 of 16S rRNA. The chain is Ribosomal RNA small subunit methyltransferase G from Escherichia coli (strain SMS-3-5 / SECEC).